A 338-amino-acid chain; its full sequence is Phosphatidate cytidylyltransferase, mitochondrial (338 aa).

This sequence belongs to the TAM41 family. It depends on Mg(2+) as a cofactor.

The protein resides in the mitochondrion inner membrane. The catalysed reaction is a 1,2-diacyl-sn-glycero-3-phosphate + CTP + H(+) = a CDP-1,2-diacyl-sn-glycerol + diphosphate. The protein operates within phospholipid metabolism; CDP-diacylglycerol biosynthesis; CDP-diacylglycerol from sn-glycerol 3-phosphate: step 3/3. Its function is as follows. Catalyzes the conversion of phosphatidic acid (PA) to CDP-diacylglycerol (CDP-DAG), an essential intermediate in the synthesis of phosphatidylglycerol, cardiolipin and phosphatidylinositol. In Xenopus laevis (African clawed frog), this protein is Phosphatidate cytidylyltransferase, mitochondrial (tamm41).